Here is a 227-residue protein sequence, read N- to C-terminus: Probable maleylacetoacetate isomerase 2 (227 aa).

Residues isoleucine 14 to proline 97 enclose the GST N-terminal domain. Residues serine 24–arginine 29, glutamine 55, valine 69, glutamate 81–serine 82, glutamine 121, and asparagine 125–isoleucine 127 each bind glutathione. Positions aspartate 102 to proline 222 constitute a GST C-terminal domain.

The protein belongs to the GST superfamily. Zeta family. Requires glutathione as cofactor.

It is found in the cytoplasm. It catalyses the reaction 4-maleylacetoacetate = 4-fumarylacetoacetate. It carries out the reaction RX + glutathione = an S-substituted glutathione + a halide anion + H(+). The protein operates within amino-acid degradation; L-phenylalanine degradation; acetoacetate and fumarate from L-phenylalanine: step 5/6. Its function is as follows. Catalyzes the glutathione dependent oxygenation of dichloroacetic acid to glyoxylic acid in vitro. Has no glutathione thioltransferase activity with 4-hydroxynonenal (4-HNE), adrenochrome, phenethyl isothiocyanate (PEITC), 5-hydroperoxyeicosatetraenoic acid ((5S)-HpETE), prostaglandin A2 (PGA2) or 2-hydroxyethyldisulfide (HED). This chain is Probable maleylacetoacetate isomerase 2 (GstZ2), found in Drosophila melanogaster (Fruit fly).